We begin with the raw amino-acid sequence, 261 residues long: Imidazole glycerol phosphate synthase subunit HisF (261 aa).

Catalysis depends on residues aspartate 12 and aspartate 131.

Belongs to the HisA/HisF family. As to quaternary structure, heterodimer of HisH and HisF.

It localises to the cytoplasm. The catalysed reaction is 5-[(5-phospho-1-deoxy-D-ribulos-1-ylimino)methylamino]-1-(5-phospho-beta-D-ribosyl)imidazole-4-carboxamide + L-glutamine = D-erythro-1-(imidazol-4-yl)glycerol 3-phosphate + 5-amino-1-(5-phospho-beta-D-ribosyl)imidazole-4-carboxamide + L-glutamate + H(+). It functions in the pathway amino-acid biosynthesis; L-histidine biosynthesis; L-histidine from 5-phospho-alpha-D-ribose 1-diphosphate: step 5/9. In terms of biological role, IGPS catalyzes the conversion of PRFAR and glutamine to IGP, AICAR and glutamate. The HisF subunit catalyzes the cyclization activity that produces IGP and AICAR from PRFAR using the ammonia provided by the HisH subunit. This is Imidazole glycerol phosphate synthase subunit HisF from Brucella melitensis biotype 2 (strain ATCC 23457).